A 1204-amino-acid chain; its full sequence is Cingulin (1204 aa).

A head region spans residues 7 to 359 (MAEPRGPVDH…VMMSSGSSKA (353 aa)). The tract at residues 25–48 (EPVSGAEMGTLRRGGRRPAKDARA) is disordered. The ZIM motif lies at 48–62 (ASTYGVAVRVQGIAG). The interval 54–67 (AVRVQGIAGQPFVV) is interaction with TJP1/ZO1. A disordered region spans residues 68 to 269 (LNSGEKGGDS…SPLSGLSRAR (202 aa)). Phosphoserine is present on residues Ser-95, Ser-96, Ser-98, Ser-135, Ser-137, Ser-140, Ser-155, and Ser-165. Residues 126 to 140 (TQWNGKLLRSQSQAS) show a composition bias toward polar residues. The span at 166 to 190 (PGSTIDTAPLSSVDSLINKFDSQLR) shows a compositional bias: polar residues. Residues 207–231 (EQRKRSKSLDSRLPRDTLEERERQS) are compositionally biased toward basic and acidic residues. Residues Ser-214, Ser-217, Ser-260, Ser-278, Ser-340, and Ser-353 each carry the phosphoserine modification. Residues 360–1161 (VAGQGELTRK…SLEKDSWRKA (802 aa)) are a coiled coil. Position 581 is an N6-acetyllysine (Lys-581). Positions 1156 to 1182 (DSWRKASRSAAESTLKHEGLSSDEEFD) are disordered. A tail region spans residues 1162–1204 (SRSAAESTLKHEGLSSDEEFDGVYDPSSIASLLTESNLQTSSC). Phosphoserine occurs at positions 1176 and 1177.

This sequence belongs to the cingulin family. As to quaternary structure, homodimer. Interacts with TJP1/ZO1 and SPEF1.

It localises to the cell junction. It is found in the tight junction. Its function is as follows. Probably plays a role in the formation and regulation of the tight junction (TJ) paracellular permeability barrier. This is Cingulin from Callithrix jacchus (White-tufted-ear marmoset).